The chain runs to 107 residues: Replication initiation control protein YabA (107 aa).

Residues His-80, Cys-82, Cys-97, and Cys-100 each coordinate Zn(2+).

This sequence belongs to the YabA family. Homotetramer. Interacts with both DnaA and DnaN, acting as a bridge between these two proteins. Requires Zn(2+) as cofactor.

The protein resides in the cytoplasm. It localises to the nucleoid. In terms of biological role, involved in control of chromosome replication initiation. Inhibits the cooperative binding of DnaA to the oriC region, thus negatively regulating initiation of chromosome replication. Inhibits the ability of DnaA-ATP to form a helix on DNA; does not disassemble preformed DnaA-DNA helices. Decreases the residence time of DnaA on the chromosome at its binding sites (oriC, replication forks and promoter-binding sites). Tethers DnaA to the replication machinery via the DNA polymerase beta sliding clamp subunit (dnaN). Associates with oriC and other DnaA targets on the chromosome in a DnaA-dependent manner. The chain is Replication initiation control protein YabA from Streptococcus gordonii (strain Challis / ATCC 35105 / BCRC 15272 / CH1 / DL1 / V288).